We begin with the raw amino-acid sequence, 313 residues long: Beta-lactamase BRO-1 (313 aa).

A signal peptide spans 1–25 (MQRRHFLQKTLLALPIIFSGNLLTG). A lipid anchor (N-palmitoyl cysteine) is attached at Cys26. The S-diacylglycerol cysteine moiety is linked to residue Cys26. Residue Ser90 is the Acyl-ester intermediate of the active site. 255 to 257 (KTG) serves as a coordination point for substrate.

This sequence belongs to the class-A beta-lactamase family.

The protein resides in the cell membrane. It carries out the reaction a beta-lactam + H2O = a substituted beta-amino acid. The chain is Beta-lactamase BRO-1 (bla) from Moraxella catarrhalis (Branhamella catarrhalis).